The following is a 390-amino-acid chain: Protein phosphatase 1B (390 aa).

Positions 1–14 (MGAFLDKPKTEKHN) are enriched in basic and acidic residues. The interval 1-20 (MGAFLDKPKTEKHNAHGAGN) is disordered. Glycine 2 carries N-myristoyl glycine lipidation. Lysine 12 participates in a covalent cross-link: Glycyl lysine isopeptide (Lys-Gly) (interchain with G-Cter in ISG15). Residues 23–295 (RYGLSSMQGW…DNMSIVLVCF (273 aa)) form the PPM-type phosphatase domain. The Mn(2+) site is built by aspartate 60, glycine 61, aspartate 243, and aspartate 286. The disordered stretch occupies residues 371–390 (NPNKDNDGGAGDLEDSLVAL). The residue at position 386 (serine 386) is a Phosphoserine.

It belongs to the PP2C family. As to quaternary structure, monomer. Interacts with PAK6. Interacts with the phosphorylated form of IKBKB/IKKB. Mg(2+) serves as cofactor. Mn(2+) is required as a cofactor. In terms of processing, isgylation negatively regulates its activity. Post-translationally, N-myristoylation is essential for the recognition of its substrates for dephosphorylation.

It is found in the cytoplasm. The protein localises to the cytosol. It localises to the membrane. The enzyme catalyses O-phospho-L-seryl-[protein] + H2O = L-seryl-[protein] + phosphate. It carries out the reaction O-phospho-L-threonyl-[protein] + H2O = L-threonyl-[protein] + phosphate. In terms of biological role, enzyme with a broad specificity. Dephosphorylates PRKAA1 and PRKAA2. Inhibits TBK1-mediated antiviral signaling by dephosphorylating it at 'Ser-172'. Plays an important role in the termination of TNF-alpha-mediated NF-kappa-B activation through dephosphorylating and inactivating IKBKB/IKKB. The protein is Protein phosphatase 1B (Ppm1b) of Rattus norvegicus (Rat).